The sequence spans 284 residues: D-tagatose-1,6-bisphosphate aldolase subunit GatY (284 aa).

D82 functions as the Proton donor in the catalytic mechanism. Residues H83 and H180 each coordinate Zn(2+). Residue G181 coordinates dihydroxyacetone phosphate. Zn(2+) is bound at residue H208. Dihydroxyacetone phosphate is bound by residues 209–211 (GAS) and 230–233 (NVAT).

This sequence belongs to the class II fructose-bisphosphate aldolase family. TagBP aldolase GatY subfamily. Forms a complex with GatZ. It depends on Zn(2+) as a cofactor.

The catalysed reaction is D-tagatofuranose 1,6-bisphosphate = D-glyceraldehyde 3-phosphate + dihydroxyacetone phosphate. The protein operates within carbohydrate metabolism; D-tagatose 6-phosphate degradation; D-glyceraldehyde 3-phosphate and glycerone phosphate from D-tagatose 6-phosphate: step 2/2. In terms of biological role, catalytic subunit of the tagatose-1,6-bisphosphate aldolase GatYZ, which catalyzes the reversible aldol condensation of dihydroxyacetone phosphate (DHAP or glycerone-phosphate) with glyceraldehyde 3-phosphate (G3P) to produce tagatose 1,6-bisphosphate (TBP). Requires GatZ subunit for full activity and stability. Is involved in the catabolism of galactitol. The chain is D-tagatose-1,6-bisphosphate aldolase subunit GatY from Shigella flexneri serotype 5b (strain 8401).